We begin with the raw amino-acid sequence, 667 residues long: Probable Na(+)/H(+) antiporter nhx-9 (667 aa).

The next 8 membrane-spanning stretches (helical) occupy residues 41–61 (VYVITVWLLIASLAKILFNLM), 73–93 (LLIIVGLALGWILHQTSLSGA), 97–117 (SHTFFLYLLPPIIFDAGYFMP), 128–148 (VLVFSVFGTIWNTFAIGGSLL), 165–185 (ILVFSALISAVDPVAVIAVFE), 192–212 (FLFINVFGEALFNDGVTVVLY), 236–256 (LSFFVVALGGAAVGIIFAIAA), and 268–288 (ILAPVFIFVLPYMAYLTAEMV). An N-linked (GlcNAc...) asparagine glycan is attached at N310. Transmembrane regions (helical) follow at residues 325–345 (MLAQSSETVIFMFLGLSTISS), 351–371 (LYFICATLFFCLIYRAIGIVV), 390–410 (FIMSYGGLRGAIAYGLVVSIP), and 418–438 (MFITATIAVIYFTVFLQGITI). Residues 637–667 (TEQLPSETPFHSGRRQSTGDLNATRRADFNV) are disordered. T644 carries the post-translational modification Phosphothreonine.

The protein belongs to the monovalent cation:proton antiporter 1 (CPA1) transporter (TC 2.A.36) family. In terms of processing, phosphorylated. As to expression, in early stage larva, expressed in the twin excretory cell processes. At later larval stages, expression is more restricted, resulting in a 'beads on a chain' appearance.

The protein resides in the cell membrane. Serves some physiological function other than regulation of cellular pH. This is Probable Na(+)/H(+) antiporter nhx-9 (nhx-9) from Caenorhabditis elegans.